A 441-amino-acid chain; its full sequence is MDIKVEEVSKLTRKVIVTLPAGDVQPKIEAAYNKLKKEVKIKGFRRGKVPSAIIVKNYKDQVEAELSEKLVQENYFNAVEKEGLDPVTHPEIQVVKYNEDGSFTFEAHVDVRPDFELGNYKGLEIEKPAVAVADEDIDAEIAEMQKKAAALHVVDRPAVDGDMVTVDFQGFENGEALAQVKSDDHQVDLGAGSMGKDFEAKLVGMSKGEVADHQITFPENHPNVIIKGKTIDFKLSVKDVKERILADLDDEFAKDAGEEFNSMDELKASIRARRIKKLEESAEGVISDRLMQKLLEGYEFEVPTRLVAHESEQMIKQTEQQLQQSGLTLEAAGLSKEKLVEENVEVAAQRVRGDFLLKKIAEVEDIKVADEDMDRGFKRIGDMYNMTVAQVKEFFQSRDDLLPFMNELLNEKILAFLRSEAVMVEEKAVEATDVQKEGASE.

A PPIase FKBP-type domain is found at 161-246 (GDMVTVDFQG…VKDVKERILA (86 aa)).

This sequence belongs to the FKBP-type PPIase family. Tig subfamily.

Its subcellular location is the cytoplasm. It catalyses the reaction [protein]-peptidylproline (omega=180) = [protein]-peptidylproline (omega=0). Its function is as follows. Involved in protein export. Acts as a chaperone by maintaining the newly synthesized protein in an open conformation. Functions as a peptidyl-prolyl cis-trans isomerase. This Desulfotalea psychrophila (strain LSv54 / DSM 12343) protein is Trigger factor.